A 208-amino-acid chain; its full sequence is Holliday junction branch migration complex subunit RuvA (208 aa).

The segment at M1–A69 is domain I. Positions V70 to T148 are domain II. Positions L149 to Q159 are flexible linker. Positions Q159 to Q208 are domain III.

The protein belongs to the RuvA family. In terms of assembly, homotetramer. Forms an RuvA(8)-RuvB(12)-Holliday junction (HJ) complex. HJ DNA is sandwiched between 2 RuvA tetramers; dsDNA enters through RuvA and exits via RuvB. An RuvB hexamer assembles on each DNA strand where it exits the tetramer. Each RuvB hexamer is contacted by two RuvA subunits (via domain III) on 2 adjacent RuvB subunits; this complex drives branch migration. In the full resolvosome a probable DNA-RuvA(4)-RuvB(12)-RuvC(2) complex forms which resolves the HJ.

The protein resides in the cytoplasm. In terms of biological role, the RuvA-RuvB-RuvC complex processes Holliday junction (HJ) DNA during genetic recombination and DNA repair, while the RuvA-RuvB complex plays an important role in the rescue of blocked DNA replication forks via replication fork reversal (RFR). RuvA specifically binds to HJ cruciform DNA, conferring on it an open structure. The RuvB hexamer acts as an ATP-dependent pump, pulling dsDNA into and through the RuvAB complex. HJ branch migration allows RuvC to scan DNA until it finds its consensus sequence, where it cleaves and resolves the cruciform DNA. In Acaryochloris marina (strain MBIC 11017), this protein is Holliday junction branch migration complex subunit RuvA.